A 337-amino-acid chain; its full sequence is Probable sulfurtransferase (337 aa).

ATP is bound at residue glycine 83. [4Fe-4S] cluster contacts are provided by cysteine 172 and cysteine 175. Positions 179 and 206 each coordinate ATP. Cysteine 284 serves as a coordination point for [4Fe-4S] cluster.

It belongs to the TtcA family. Requires [4Fe-4S] cluster as cofactor. Mg(2+) serves as cofactor.

The protein is Probable sulfurtransferase of Methanocaldococcus jannaschii (strain ATCC 43067 / DSM 2661 / JAL-1 / JCM 10045 / NBRC 100440) (Methanococcus jannaschii).